The chain runs to 155 residues: Transcriptional repressor NrdR (155 aa).

A zinc finger lies at 3–34 (CPFCHAEETKVVDSRLVADGAQVRRRRECLEC). The ATP-cone domain occupies 49–139 (PLIIKRDGRR…VYKRFKDVSD (91 aa)).

It belongs to the NrdR family. Zn(2+) is required as a cofactor.

Functionally, negatively regulates transcription of bacterial ribonucleotide reductase nrd genes and operons by binding to NrdR-boxes. The polypeptide is Transcriptional repressor NrdR (Legionella pneumophila (strain Lens)).